We begin with the raw amino-acid sequence, 418 residues long: Mitochondrial outer membrane protein SLC25A46 (418 aa).

A disordered region spans residues 1 to 30 (MHPRRPDGFDGLGYRGGARDEQGFGGAFPA). Residue Ser32 is modified to Phosphoserine. The interval 44–93 (TTPPDIPGSRNLHWGEKSPPYGVPTTSTPYEGPTEEPFSSGGGGSVQGQS) is disordered. The residue at position 45 (Thr45) is a Phosphothreonine. The Solcar 1 repeat unit spans residues 96–187 (QLNRFAGFGI…GIISEFTPLP (92 aa)). 6 helical membrane-spanning segments follow: residues 103 to 123 (FGIGLASLFTENVLAHPCIVL), 167 to 187 (FIVQGVTLGAEGIISEFTPLP), 202 to 222 (HLLLKSLTYVVAMPFYSASLI), 258 to 278 (LLPLLSLIFPTVLHGVLHYII), 314 to 334 (FPELIANFAASLCSDVILYPL), and 382 to 402 (VFGFYKGFGAVIIQYTLHAAV). The stretch at 311-413 (DAYFPELIAN…QITKIIYSTL (103 aa)) is one Solcar 2 repeat.

The protein belongs to the mitochondrial carrier (TC 2.A.29) family. In terms of assembly, associates with the mitochondrial contact site and cristae organizing system (MICOS) complex. May associate with the endoplasmic reticulum membrane protein complex (EMC).

It is found in the mitochondrion outer membrane. Transmembrane protein of the mitochondrial outer membrane that controls mitochondrial organization. May regulate the assembly of the MICOS (mitochondrial contact site and cristae organizing system) complex which is essential to the biogenesis and dynamics of mitochondrial cristae, the inwards folds of the inner mitochondrial membrane. Through its interaction with the EMC (endoplasmic reticulum membrane protein complex), could regulate mitochondrial lipid homeostasis and thereby mitochondrial fission. In Homo sapiens (Human), this protein is Mitochondrial outer membrane protein SLC25A46.